Here is a 956-residue protein sequence, read N- to C-terminus: Glutamyl aminopeptidase (956 aa).

At 1 to 21 the chain is on the cytoplasmic side; that stretch reads MILEERSSWEGSKRYCIKTKH. The chain crosses the membrane as a helical; Signal-anchor for type II membrane protein span at residues 22–42; that stretch reads VAIICAVVVAVGLIVGLSVGL. The Extracellular segment spans residues 43 to 956; the sequence is TRSCDSTEGM…IRNWFLDLNG (914 aa). Positions 48–87 are disordered; sequence STEGMTQGTTQGTTQAPSHLPPVTSPPEDQGVCPASEDES. A compositionally biased stretch (low complexity) spans 49–62; that stretch reads TEGMTQGTTQGTTQ. 2 N-linked (GlcNAc...) asparagine glycosylation sites follow: asparagine 126 and asparagine 199. Glutamate 225 provides a ligand contact to substrate. Asparagine 326 carries N-linked (GlcNAc...) asparagine glycosylation. 359-363 contributes to the substrate binding site; the sequence is GAMEN. Histidine 395 serves as a coordination point for Zn(2+). Glutamate 396 acts as the Proton acceptor in catalysis. The Zn(2+) site is built by histidine 399 and glutamate 418. Asparagine 556, asparagine 569, asparagine 599, asparagine 643, asparagine 647, asparagine 679, asparagine 764, asparagine 797, asparagine 802, and asparagine 829 each carry an N-linked (GlcNAc...) asparagine glycan. Residue arginine 888 participates in substrate binding.

The protein belongs to the peptidase M1 family. In terms of assembly, homodimer; disulfide-linked. Zn(2+) serves as cofactor.

The protein resides in the cell membrane. It carries out the reaction Release of N-terminal glutamate (and to a lesser extent aspartate) from a peptide.. Substrate specificity is modulated by calcium which enhances the enzymatic activity for cleavage of acidic residues while reducing its activity with basic residues. Inhibited by aminopeptidase inhibitors amastatin and bestatin. Its function is as follows. Regulates central hypertension through its calcium-modulated preference to cleave N-terminal acidic residues from peptides such as angiotensin II. This Bos taurus (Bovine) protein is Glutamyl aminopeptidase (ENPEP).